Here is a 240-residue protein sequence, read N- to C-terminus: Sugar fermentation stimulation protein homolog (240 aa).

Belongs to the SfsA family.

The sequence is that of Sugar fermentation stimulation protein homolog from Natranaerobius thermophilus (strain ATCC BAA-1301 / DSM 18059 / JW/NM-WN-LF).